Here is a 264-residue protein sequence, read N- to C-terminus: Propanediol uptake facilitator PduF (264 aa).

2 helical membrane passes run 10–30 and 42–62; these read GAEF…LSAL and ICII…GISG. An NPA 1 motif is present at residues 66–68; that stretch reads NPA. 3 helical membrane passes run 84 to 104, 143 to 163, and 179 to 199; these read VLPY…LAYV, VWQA…MIMA, and LLIG…TGFA. The NPA 2 motif lies at 201 to 203; sequence NPA. Residues 228–248 traverse the membrane as a helical segment; sequence IPYFIVPIVAPVIGACAGAAI.

It belongs to the MIP/aquaporin (TC 1.A.8) family.

The protein localises to the cell inner membrane. Probably facilitates diffusion of 1,2-propanediol (1,2-PD) into the cell. Modeling suggests active transport of 1,2-PD is required at low extracellular concentrations to allow maximal growth and saturation of PduP/PduQ within the bacterial microcompartment (BMC); this protein may be the cellular transporter. Functionally, the 1,2-PD-specific bacterial microcompartment (BMC) concentrates low levels of 1,2-PD catabolic enzymes, concentrates volatile reaction intermediates thus enhancing pathway flux and keeps the level of toxic, mutagenic propionaldehyde low. The sequence is that of Propanediol uptake facilitator PduF from Salmonella typhimurium (strain LT2 / SGSC1412 / ATCC 700720).